A 310-amino-acid polypeptide reads, in one-letter code: Protein-methionine-sulfoxide reductase catalytic subunit MsrP (310 aa).

Positions M1–A45 form a signal peptide, tat-type signal. Mo-molybdopterin-binding positions include N73, Y76–E77, C131, T166, N214, R219, and S230–K232.

This sequence belongs to the MsrP family. As to quaternary structure, heterodimer of a catalytic subunit (MsrP) and a heme-binding subunit (MsrQ). The cofactor is Mo-molybdopterin. In terms of processing, predicted to be exported by the Tat system. The position of the signal peptide cleavage has not been experimentally proven.

It localises to the periplasm. It catalyses the reaction L-methionyl-[protein] + a quinone + H2O = L-methionyl-(S)-S-oxide-[protein] + a quinol. The catalysed reaction is L-methionyl-[protein] + a quinone + H2O = L-methionyl-(R)-S-oxide-[protein] + a quinol. In terms of biological role, part of the MsrPQ system that repairs oxidized periplasmic proteins containing methionine sulfoxide residues (Met-O), using respiratory chain electrons. Thus protects these proteins from oxidative-stress damage caused by reactive species of oxygen and chlorine generated by the host defense mechanisms. MsrPQ is essential for the maintenance of envelope integrity under bleach stress, rescuing a wide series of structurally unrelated periplasmic proteins from methionine oxidation. The catalytic subunit MsrP is non-stereospecific, being able to reduce both (R-) and (S-) diastereoisomers of methionine sulfoxide. This chain is Protein-methionine-sulfoxide reductase catalytic subunit MsrP, found in Methylococcus capsulatus (strain ATCC 33009 / NCIMB 11132 / Bath).